A 478-amino-acid chain; its full sequence is Aspartyl/glutamyl-tRNA(Asn/Gln) amidotransferase subunit B (478 aa).

It belongs to the GatB/GatE family. GatB subfamily. In terms of assembly, heterotrimer of A, B and C subunits.

The enzyme catalyses L-glutamyl-tRNA(Gln) + L-glutamine + ATP + H2O = L-glutaminyl-tRNA(Gln) + L-glutamate + ADP + phosphate + H(+). It carries out the reaction L-aspartyl-tRNA(Asn) + L-glutamine + ATP + H2O = L-asparaginyl-tRNA(Asn) + L-glutamate + ADP + phosphate + 2 H(+). Functionally, allows the formation of correctly charged Asn-tRNA(Asn) or Gln-tRNA(Gln) through the transamidation of misacylated Asp-tRNA(Asn) or Glu-tRNA(Gln) in organisms which lack either or both of asparaginyl-tRNA or glutaminyl-tRNA synthetases. The reaction takes place in the presence of glutamine and ATP through an activated phospho-Asp-tRNA(Asn) or phospho-Glu-tRNA(Gln). The sequence is that of Aspartyl/glutamyl-tRNA(Asn/Gln) amidotransferase subunit B from Syntrophotalea carbinolica (strain DSM 2380 / NBRC 103641 / GraBd1) (Pelobacter carbinolicus).